The sequence spans 542 residues: Chaperonin GroEL (542 aa).

ATP-binding positions include 29 to 32, 86 to 90, glycine 413, 476 to 478, and aspartate 492; these read TLGP, DGTTT, and NAA.

This sequence belongs to the chaperonin (HSP60) family. As to quaternary structure, forms a cylinder of 14 subunits composed of two heptameric rings stacked back-to-back. Interacts with the co-chaperonin GroES.

It localises to the cytoplasm. The catalysed reaction is ATP + H2O + a folded polypeptide = ADP + phosphate + an unfolded polypeptide.. Functionally, together with its co-chaperonin GroES, plays an essential role in assisting protein folding. The GroEL-GroES system forms a nano-cage that allows encapsulation of the non-native substrate proteins and provides a physical environment optimized to promote and accelerate protein folding. This chain is Chaperonin GroEL, found in Listeria welshimeri serovar 6b (strain ATCC 35897 / DSM 20650 / CCUG 15529 / CIP 8149 / NCTC 11857 / SLCC 5334 / V8).